The sequence spans 659 residues: MFQDNPLLAQLKQQIHDSKEQVEGVVKSTDKAYGFLECDKKTYFIAPPSMKKVMHGDKIKATIEKQGDKEQAEPEALIEPMLTRFIAKVRFNKDKKLQVLVDHPSINQPIGAQQAKSVKEELQEGDWVVANLKTHPLRDDRFFYATINQFICRADDELAPWWVTLARHEQSRYPVQGAEHYEMLDQKTRENLTALHFVTIDSESTMDMDDALYIEPIAQNSTQTGWKLVVAIADPTAYIALDSQIEQEAKQRCFTNYLPGFNIPMLPRELSDELCSLIANETRPALVCYIETDLAGNITAKPHFVSAYVQSKAKLAYNKVSDYLEQADNAWQPETPETAQQIHWLHQFTKARIQWHKTHSLLFKEKPDYAFVLAENGKVQEIKAEYRRIANQIVEEAMIIANICAAQFLHEQAKTGIFNTHSGFDKKFLENAHHFLMANLANEQNQTELAERYSVENLATLNGYCQMRHDIEPIESDYLELRLRRYLTFAEFKSELAPHFGLGLEGYATWTSPIRKYSDMVNHRLIKAVLAKQPYEKTQNDVLARLQEARRQNRLVERDIADWLYCRYLAPKVAENVEFNAEVQDVMRGGLRVQLLENGASMFIPASTLHNNKEEMQVNSDEIALYIKGERTYKIGDIVKVKLTEVKEATRSIVGEILQ.

The region spanning 189–531 (RENLTALHFV…NHRLIKAVLA (343 aa)) is the RNB domain. The 83-residue stretch at 576–658 (NVEFNAEVQD…ATRSIVGEIL (83 aa)) folds into the S1 motif domain.

Belongs to the RNR ribonuclease family. RNase II subfamily.

It localises to the cytoplasm. It carries out the reaction Exonucleolytic cleavage in the 3'- to 5'-direction to yield nucleoside 5'-phosphates.. Functionally, involved in mRNA degradation. Hydrolyzes single-stranded polyribonucleotides processively in the 3' to 5' direction. The polypeptide is Exoribonuclease 2 (Haemophilus influenzae (strain 86-028NP)).